A 335-amino-acid chain; its full sequence is Thioredoxin-related transmembrane protein 4 (335 aa).

An N-terminal signal peptide occupies residues 1 to 20 (MTGGFCVPVLLAAWLAAAAA). The region spanning 26–133 (AALPAEESRV…YEDLQNYILE (108 aa)) is the Thioredoxin domain. Residues C60 and C63 each act as nucleophile in the active site. Residues C60 and C63 are joined by a disulfide bond. A helical membrane pass occupies residues 186–206 (VFFVIATLVFGLFMGLILVVI). The segment at 222–316 (CEQEQSTGEA…EDGAHPADTQ (95 aa)) is disordered. Over residues 238–280 (QDAEEEKDDSNEEENKDSLVDDEEEKEDIGDEDEGEEDEEEDN) the composition is skewed to acidic residues. S247 and S255 each carry phosphoserine. Over residues 286-298 (AEERSDTNERAVV) the composition is skewed to basic and acidic residues.

It localises to the nucleus inner membrane. It is found in the endoplasmic reticulum membrane. The polypeptide is Thioredoxin-related transmembrane protein 4 (Tmx4) (Mus musculus (Mouse)).